Here is a 343-residue protein sequence, read N- to C-terminus: Zinc finger CCCH domain-containing protein 1 (343 aa).

The interval 1–102 (MSDSGEPKPS…PERSVFHYDS (102 aa)) is disordered. Residues 7–25 (PKPSQQEEPLPQPAAQETQ) show a composition bias toward low complexity. Residues 35-44 (KPTKSKNIRK) show a composition bias toward basic residues. Residues 79 to 91 (SSGPSKSSTTTSG) are compositionally biased toward low complexity. The C3H1-type zinc-finger motif lies at 200 to 228 (DYQPDICKDYKETGYCGYGDSCKFLHDRG). The interval 249–268 (RNKAMGVEDEDDEADKDSDE) is disordered. Positions 255 to 268 (VEDEDDEADKDSDE) are enriched in acidic residues. The segment at 277–315 (CFICREPFVDPVVTKCKHYFCEHCALKHHTKNKKCFVCN) adopts an RING-type zinc-finger fold.

The chain is Zinc finger CCCH domain-containing protein 1 from Arabidopsis thaliana (Mouse-ear cress).